Consider the following 110-residue polypeptide: N(4)-acetylcytidine amidohydrolase (110 aa).

The region spanning 6–93 (TFFERFEQDI…IQEIYPGLEQ (88 aa)) is the ASCH domain. The active-site Proton acceptor is K20. T23 acts as the Nucleophile in catalysis. The Proton donor role is filled by E73.

It belongs to the N(4)-acetylcytidine amidohydrolase family.

The catalysed reaction is N(4)-acetylcytidine + H2O = cytidine + acetate + H(+). The enzyme catalyses N(4)-acetyl-2'-deoxycytidine + H2O = 2'-deoxycytidine + acetate + H(+). It catalyses the reaction N(4)-acetylcytosine + H2O = cytosine + acetate + H(+). Functionally, catalyzes the hydrolysis of N(4)-acetylcytidine (ac4C). In Shewanella sp. (strain ANA-3), this protein is N(4)-acetylcytidine amidohydrolase.